The sequence spans 760 residues: Ferric/cupric reductase transmembrane component 1 (760 aa).

A signal peptide spans 1–18; that stretch reads MKIQQLIVFLFAVVLIDA. Topologically, residues 19–212 are extracellular; the sequence is RTPKRYSELD…NNNFNLSINY (194 aa). Residues Asn78, Asn91, Asn111, Asn143, Asn155, and Asn207 are each glycosylated (N-linked (GlcNAc...) asparagine). The segment at 119–177 is disordered; the sequence is TTKSSSGSKTSASASKSSKSTGSSNASKSSTNAHGSNSSTSSTSSSSSKSGKGNSGTST. The chain crosses the membrane as a helical span at residues 213 to 233; that stretch reads GSGLLGYWAGILAIAIFANMI. The Cytoplasmic segment spans residues 234-288; it reads KKMFPSLTNYLSGSISNLFRKHLFLPATFRKKKAQEFSIGVYGFFDGLIPTRLET. The chain crosses the membrane as a helical span at residues 289–309; that stretch reads IIVVIFVVLTGLFSALHIHHV. Residues 310 to 324 lie on the Extracellular side of the membrane; it reads KDNPQYATKNAELGH. A helical membrane pass occupies residues 325–345; sequence LIADRTGILGTFLIPLLILFG. One can recognise a Ferric oxidoreductase domain in the interval 330 to 445; it reads TGILGTFLIP…HIVLVVFFVV (116 aa). At 346-371 the chain is on the cytoplasmic side; the sequence is GRNNFLQWLTGWDFATFIMYHRWISR. Positions 366 and 380 each coordinate heme. The helical transmembrane segment at 372–392 threads the bilayer; it reads VDVLLIIVHAITFSVSDKATG. Residues 393–403 lie on the Extracellular side of the membrane; that stretch reads KYNTRMKRDFM. Residues 404–424 traverse the membrane as a helical segment; that stretch reads IWGTVSTICGGFILFQAMLFF. Topologically, residues 425 to 430 are cytoplasmic; the sequence is RRKCYE. A helical membrane pass occupies residues 431–451; the sequence is VFFLIHIVLVVFFVVGGYYHL. 2 residues coordinate heme: His436 and His450. Residues 452-760 lie on the Extracellular side of the membrane; the sequence is ESQGYGDFMW…EYHEQLQTWA (309 aa). The FAD-binding FR-type domain occupies 465-583; the sequence is AVWAFDRVVR…EGPYGEPSSA (119 aa). Residue 575–578 coordinates NADP(+); sequence GPYG. N-linked (GlcNAc...) asparagine glycosylation occurs at Asn615. 726-727 provides a ligand contact to NADP(+); that stretch reads CG. Asn744 carries N-linked (GlcNAc...) asparagine glycosylation.

The protein belongs to the ferric reductase (FRE) family. It depends on FAD as a cofactor. Heme is required as a cofactor.

It localises to the cell membrane. It catalyses the reaction 2 a Fe(II)-siderophore + NADP(+) + H(+) = 2 a Fe(III)-siderophore + NADPH. In terms of biological role, ferric reductase responsible for reducing extracellular iron and copper prior to import. Catalyzes the reductive uptake of Fe(3+)-salts and Fe(3+) bound to catecholate or hydroxamate siderophores. Fe(3+) is reduced to Fe(2+), which then dissociates from the siderophore and can be imported by the high-affinity Fe(2+) transport complex in the plasma membrane. Also participates in Cu(2+) reduction and Cu(+) uptake. Involved in maintenance of cell wall integrity (CWI), mitochondrial function, and interaction between the pathogen and the host. This Candida albicans (strain SC5314 / ATCC MYA-2876) (Yeast) protein is Ferric/cupric reductase transmembrane component 1.